We begin with the raw amino-acid sequence, 290 residues long: 4-hydroxybenzoate octaprenyltransferase (290 aa).

The next 8 helical transmembrane spans lie at 23 to 43 (IGAL…TPGV), 46 to 66 (LWIM…GCVV), 99 to 119 (LFVV…TMTI), 141 to 161 (LPQV…FAAV), 163 to 183 (ESVP…AVAY), 213 to 233 (LIIG…GELN), 234 to 254 (GLGW…VYQQ), and 268 to 288 (AFMN…MSYW).

The protein belongs to the UbiA prenyltransferase family. It depends on Mg(2+) as a cofactor.

It localises to the cell inner membrane. The catalysed reaction is all-trans-octaprenyl diphosphate + 4-hydroxybenzoate = 4-hydroxy-3-(all-trans-octaprenyl)benzoate + diphosphate. It functions in the pathway cofactor biosynthesis; ubiquinone biosynthesis. Catalyzes the prenylation of para-hydroxybenzoate (PHB) with an all-trans polyprenyl group. Mediates the second step in the final reaction sequence of ubiquinone-8 (UQ-8) biosynthesis, which is the condensation of the polyisoprenoid side chain with PHB, generating the first membrane-bound Q intermediate 3-octaprenyl-4-hydroxybenzoate. The sequence is that of 4-hydroxybenzoate octaprenyltransferase from Shigella flexneri.